The primary structure comprises 204 residues: Guanylate kinase (204 aa).

Residues Met-1–Cys-182 enclose the Guanylate kinase-like domain. Ala-7–Ser-14 provides a ligand contact to ATP.

The protein belongs to the guanylate kinase family.

The protein localises to the cytoplasm. The enzyme catalyses GMP + ATP = GDP + ADP. In terms of biological role, essential for recycling GMP and indirectly, cGMP. The polypeptide is Guanylate kinase (Baumannia cicadellinicola subsp. Homalodisca coagulata).